Reading from the N-terminus, the 110-residue chain is MLPFKTLALFLLTAVAEIVGCYLPWLWLRQGRSAWLLVPAAASLALFAWLLTLHPAATGRVYAAYGGVYVAVALVWLWTVDGVRPGPWDWLGVAVTLCGMAIIAFAPRGG.

4 helical membrane-spanning segments follow: residues 7 to 27 (LALF…PWLW), 33 to 53 (SAWL…LLTL), 63 to 83 (AAYG…VDGV), and 86 to 106 (GPWD…IAFA).

Belongs to the UPF0060 family.

Its subcellular location is the cell inner membrane. This Acidovorax sp. (strain JS42) protein is UPF0060 membrane protein Ajs_2087.